Consider the following 190-residue polypeptide: Dynein axonemal light chain 1 (190 aa).

Residue Ala-2 is modified to N-acetylalanine. LRR repeat units follow at residues 49–70, 71–92, 94–115, and 116–137; these read NCEK…NGLK, NLRI…EAVG, TLEE…HVMK, and KLKI…LKLA. Position 56 is a phosphoserine (Ser-56). An LRRCT domain is found at 150–190; it reads NPLEEKHSAEGNWIDEATKRVPKLKKLDGTPVIKEDEEEES.

Belongs to the dynein light chain LC1-type family. In terms of assembly, interacts with ZMYND10 (via C-terminus). Interacts with DNAH5, a outer arm dynein heavy chain. Interacts with tubulin located within the A-tubule of the outer doublets in a ATP-independent manner. Expressed in the respiratory epithelium of the upper airways and the ependymal cells lining the brain ventricles.

Its subcellular location is the cytoplasm. The protein resides in the cytoskeleton. The protein localises to the cilium axoneme. Part of the multisubunit axonemal ATPase complexes that generate the force for cilia motility and govern beat frequency. Component of the outer arm dynein (ODA). May be involved in a mechanosensory feedback mechanism controlling ODA activity based on external conformational cues by tethering the outer arm dynein heavy chain (DNAH5) to the microtubule within the axoneme. Important for ciliary function in the airways and for the function of the cilia that produce the nodal flow essential for the determination of the left-right asymmetry. The protein is Dynein axonemal light chain 1 (Dnal1) of Mus musculus (Mouse).